We begin with the raw amino-acid sequence, 843 residues long: Protein P (843 aa).

The segment at 1 to 177 (MPLSYQHFRK…FCGSPYSWEQ (177 aa)) is terminal protein domain (TP). Residues 178–346 (DLQHGRLVFQ…YCLSHIVNLI (169 aa)) form a spacer region. The segment at 219–269 (RKSRLGPQPAQGQLAGRQQGGSGSIRARVHPSPWGTVGVEPSGSGPTHNCA) is disordered. Positions 223–235 (LGPQPAQGQLAGR) are enriched in low complexity. Residues 347 to 690 (EDWGPCTEHG…YLNLYPVARQ (344 aa)) form a polymerase/reverse transcriptase domain (RT) region. The Reverse transcriptase domain occupies 357 to 600 (EHRIRTPRTP…YSLNFMGYVI (244 aa)). Mg(2+)-binding residues include D429, D551, and D552.

Belongs to the hepadnaviridae P protein family.

The catalysed reaction is DNA(n) + a 2'-deoxyribonucleoside 5'-triphosphate = DNA(n+1) + diphosphate. It catalyses the reaction Endonucleolytic cleavage to 5'-phosphomonoester.. With respect to regulation, activated by host HSP70 and HSP40 in vitro to be able to bind the epsilon loop of the pgRNA. Because deletion of the RNase H region renders the protein partly chaperone-independent, the chaperones may be needed indirectly to relieve occlusion of the RNA-binding site by this domain. Inhibited by several reverse-transcriptase inhibitors: Lamivudine, Adefovir and Entecavir. Multifunctional enzyme that converts the viral RNA genome into dsDNA in viral cytoplasmic capsids. This enzyme displays a DNA polymerase activity that can copy either DNA or RNA templates, and a ribonuclease H (RNase H) activity that cleaves the RNA strand of RNA-DNA heteroduplexes in a partially processive 3'- to 5'-endonucleasic mode. Neo-synthesized pregenomic RNA (pgRNA) are encapsidated together with the P protein, and reverse-transcribed inside the nucleocapsid. Initiation of reverse-transcription occurs first by binding the epsilon loop on the pgRNA genome, and is initiated by protein priming, thereby the 5'-end of (-)DNA is covalently linked to P protein. Partial (+)DNA is synthesized from the (-)DNA template and generates the relaxed circular DNA (RC-DNA) genome. After budding and infection, the RC-DNA migrates in the nucleus, and is converted into a plasmid-like covalently closed circular DNA (cccDNA). The activity of P protein does not seem to be necessary for cccDNA generation, and is presumably released from (+)DNA by host nuclear DNA repair machinery. This chain is Protein P, found in Hepatitis B virus genotype B2 subtype adw (isolate China/patient4/1996) (HBV-B).